A 350-amino-acid chain; its full sequence is Atypical chemokine receptor 4 (350 aa).

Topologically, residues 1–42 are extracellular; sequence MALEQNQSTDYYYEENEMNGTYDYSQYELICIKEDVREFAKV. 2 N-linked (GlcNAc...) asparagine glycosylation sites follow: Asn6 and Asn19. Residues 43 to 63 form a helical membrane-spanning segment; it reads FLPVFLTIVFVIGLAGNSMVV. Topologically, residues 64–87 are cytoplasmic; it reads AIYAYYKKQRTKTDVYILNLAVAD. A helical transmembrane segment spans residues 88–108; sequence LLLLFTLPFWAVNAVHGWVLG. At 109-113 the chain is on the extracellular side; sequence KIMCK. A disulfide bond links Cys112 and Cys184. A helical transmembrane segment spans residues 114–134; it reads ITSALYTLNFVSGMQFLACIS. The Cytoplasmic segment spans residues 135 to 154; that stretch reads IDRYVAVTKVPSQSGVGKPC. The chain crosses the membrane as a helical span at residues 155–175; that stretch reads WIICFCVWMAAILLSIPQLVF. Over 176 to 201 the chain is Extracellular; the sequence is YTVNDNARCIPIFPRYLGTSMKALIQ. The helical transmembrane segment at 202–222 threads the bilayer; that stretch reads MLEICIGFVVPFLIMGVCYFI. Over 223-240 the chain is Cytoplasmic; the sequence is TARTLMKMPNIKISRPLK. A helical transmembrane segment spans residues 241 to 261; sequence VLLTVVIVFIVTQLPYNIVKF. Over 262-289 the chain is Extracellular; that stretch reads CRAIDIIYSLITSCNMSKRMDIAIQVTE. The helical transmembrane segment at 290-310 threads the bilayer; sequence SIALFHSCLNPILYVFMGASF. The Cytoplasmic segment spans residues 311–350; it reads KNYVMKVAKKYGSWRRQRQSVEEFPFDSEGPTEPTSTFSI.

The protein belongs to the G-protein coupled receptor 1 family. Atypical chemokine receptor subfamily. As to quaternary structure, forms heteromers with CXCR3. Interacts with ARRB1 and ARRB2. In terms of processing, the Ser/Thr residues in the C-terminal cytoplasmic tail may be phosphorylated. Predominantly expressed in heart. Lower expression in lung, pancreas, spleen, colon, skeletal muscle and small intestine.

It is found in the early endosome. The protein resides in the recycling endosome. The protein localises to the cell membrane. Its function is as follows. Atypical chemokine receptor that controls chemokine levels and localization via high-affinity chemokine binding that is uncoupled from classic ligand-driven signal transduction cascades, resulting instead in chemokine sequestration, degradation, or transcytosis. Also known as interceptor (internalizing receptor) or chemokine-scavenging receptor or chemokine decoy receptor. Acts as a receptor for chemokines CCL2, CCL8, CCL13, CCL19, CCL21 and CCL25. Chemokine-binding does not activate G-protein-mediated signal transduction but instead induces beta-arrestin recruitment, leading to ligand internalization. Plays an important role in controlling the migration of immune and cancer cells that express chemokine receptors CCR7 and CCR9, by reducing the availability of CCL19, CCL21, and CCL25 through internalization. Negatively regulates CXCR3-induced chemotaxis. Regulates T-cell development in the thymus. This chain is Atypical chemokine receptor 4 (ACKR4), found in Homo sapiens (Human).